The chain runs to 150 residues: Small ribosomal subunit protein uS19y (150 aa).

It belongs to the universal ribosomal protein uS19 family.

Its subcellular location is the cytoplasm. The chain is Small ribosomal subunit protein uS19y (RPS15C) from Arabidopsis thaliana (Mouse-ear cress).